The sequence spans 591 residues: BRCA1-associated protein (591 aa).

The residue at position 52 (Ser-52) is a Phosphoserine. Residues 82 to 93 are compositionally biased toward basic and acidic residues; that stretch reads DEVRDTVEEKKP. Positions 82-124 are disordered; the sequence is DEVRDTVEEKKPSAAPVSAQRSREQSESVNTAPESPSKQLPDQ. The segment covering 108–124 has biased composition (polar residues); it reads ESVNTAPESPSKQLPDQ. Phosphoserine occurs at positions 116 and 118. The RING-type zinc finger occupies 263–303; it reads CTVCLERMDESVNGILTTLCNHSFHSQCLQRWDDTTCPVCR. Residues 300-392 form a UBP-type; degenerate zinc finger; it reads PVCRYCQTPE…GKIVQYECEG (93 aa). Positions 316, 319, 328, 331, 336, 343, 347, and 353 each coordinate Zn(2+). A coiled-coil region spans residues 430 to 536; the sequence is EKDTAEEINN…EIQEQLRDVM (107 aa). The disordered stretch occupies residues 563–591; the sequence is IAMASAPNPPSSGAGGKLQSRKGRSKRGK. The span at 581-591 shows a compositional bias: basic residues; the sequence is QSRKGRSKRGK.

Interacts with the nuclear localization signal of BRCA1 and with the N-terminal of KSR1. The C-terminal portion of BRCA1 interacts with DDB1. Isoform 2 is highly expressed in testis, lower levels in brain, heart, lung, stomach, colon, uterus, liver and kidney. Isoform 1 is only expressed in the testis. Isoform 2 is predominant over isoform 1 in both fetal and adult testis.

The protein localises to the cytoplasm. It carries out the reaction S-ubiquitinyl-[E2 ubiquitin-conjugating enzyme]-L-cysteine + [acceptor protein]-L-lysine = [E2 ubiquitin-conjugating enzyme]-L-cysteine + N(6)-ubiquitinyl-[acceptor protein]-L-lysine.. It functions in the pathway protein modification; protein ubiquitination. In terms of biological role, negatively regulates MAP kinase activation by limiting the formation of Raf/MEK complexes probably by inactivation of the KSR1 scaffold protein. Also acts as a Ras responsive E3 ubiquitin ligase that, on activation of Ras, is modified by auto-polyubiquitination resulting in the release of inhibition of Raf/MEK complex formation. May also act as a cytoplasmic retention protein with a role in regulating nuclear transport. This chain is BRCA1-associated protein, found in Mus musculus (Mouse).